Reading from the N-terminus, the 343-residue chain is Leucine-rich repeat-containing protein 39 (343 aa).

LRR repeat units follow at residues 64 to 87 (EEGR…LVQL), 88 to 110 (SQIQ…ISSF), 111 to 133 (QSLI…IGKL), 134 to 156 (TRLR…LGCC), 158 to 180 (NLEK…LSNL), 181 to 203 (KKLS…VVNL), 204 to 226 (PSLE…IHRM), 228 to 249 (KLHT…ISRM), 250 to 274 (KSLD…GMSN), and 275 to 295 (LRFV…PDLN).

It is found in the cytoplasm. It localises to the myofibril. The protein localises to the sarcomere. The protein resides in the m line. Component of the sarcomeric M-band which plays a role in myocyte response to biomechanical stress. May regulate expression of other M-band proteins via an SRF-dependent pathway. Important for normal contractile function in heart. This Danio rerio (Zebrafish) protein is Leucine-rich repeat-containing protein 39.